Here is a 164-residue protein sequence, read N- to C-terminus: PTS system sorbose-specific EIIB component (164 aa).

Residues 1 to 164 (MQITLARIDD…DKINETAFCE (164 aa)) enclose the PTS EIIB type-4 domain. The active-site Pros-phosphohistidine intermediate is the H14. H14 bears the Phosphohistidine; by EIIA mark.

As to quaternary structure, dimer of dimers.

The protein localises to the cytoplasm. It carries out the reaction keto-L-sorbose(out) + N(pros)-phospho-L-histidyl-[protein] = L-sorbose 1-phosphate(in) + L-histidyl-[protein]. Its function is as follows. The phosphoenolpyruvate-dependent sugar phosphotransferase system (PTS), a major carbohydrate active transport system, catalyzes the phosphorylation of incoming sugar substrates concomitant with their translocation across the cell membrane. The enzyme II SorABFM PTS system is involved in L-sorbose transport. The chain is PTS system sorbose-specific EIIB component from Klebsiella pneumoniae.